The following is a 123-amino-acid chain: Secreted RxLR effector protein RXLR-C21 (123 aa).

The signal sequence occupies residues 1-23 (MRLHLLVLSVIVVSLLVSDNAHA). The short motif at 32–65 (RALRETPINGLVTNQLAVSRNLTPAKFITNSEER) is the RxLR-dEER element. A helical membrane pass occupies residues 101-121 (VTTICSIVLFVMVFGCLYKIF).

The protein belongs to the RxLR effector family.

It is found in the secreted. The protein resides in the host endoplasmic reticulum membrane. Functionally, secreted effector that does not suppress pattern-triggered immunity (PTI) in plant host. The sequence is that of Secreted RxLR effector protein RXLR-C21 from Plasmopara halstedii (Downy mildew of sunflower).